Consider the following 241-residue polypeptide: MKKLLSILAVFGVSAVGTTSVVACNKTESNNLSIVKTIAVPATVATANPKQVTNAEIKTALEANVLKAVQGVVKTATAADFQFDVYQDNKGTSLTTINLEEGNVEVYVQITPAKDKTVVIGETGYIKVTLPKIKVDISGVVIDQQIVEIKAADPKQVTKDELNAVNTYATLASAVLEAIKNKAPNAGASDFEITNNCDAGDYSAQKDVKVTVKAKDESPNISGEFKVNAKVKATLAPPKAG.

The first 23 residues, 1–23, serve as a signal peptide directing secretion; it reads MKKLLSILAVFGVSAVGTTSVVA. A lipid anchor (N-palmitoyl cysteine) is attached at Cys24. The S-diacylglycerol cysteine moiety is linked to residue Cys24.

It belongs to the spiralin family. Seems to occur as dimer, tetramers, and large oligomers of identical chains. In terms of processing, palmitate and stearate are the major lipid components.

It is found in the cell membrane. In terms of biological role, major membrane protein of spiroplasma. This chain is Spiralin (spi), found in Spiroplasma citri.